The chain runs to 345 residues: Anthranilate phosphoribosyltransferase (345 aa).

Residues 77 to 79, 82 to 83, T87, 89 to 92, 106 to 114, and S118 each bind 5-phospho-alpha-D-ribose 1-diphosphate; these read TAG, GD, NVST, and KHGNRAVSG. An anthranilate-binding site is contributed by G79. Position 91 (S91) interacts with Mg(2+). Residue N109 participates in anthranilate binding. Anthranilate is bound at residue R164. The Mg(2+) site is built by D223 and E224.

Belongs to the anthranilate phosphoribosyltransferase family. As to quaternary structure, homodimer. Mg(2+) is required as a cofactor.

The catalysed reaction is N-(5-phospho-beta-D-ribosyl)anthranilate + diphosphate = 5-phospho-alpha-D-ribose 1-diphosphate + anthranilate. The protein operates within amino-acid biosynthesis; L-tryptophan biosynthesis; L-tryptophan from chorismate: step 2/5. Catalyzes the transfer of the phosphoribosyl group of 5-phosphorylribose-1-pyrophosphate (PRPP) to anthranilate to yield N-(5'-phosphoribosyl)-anthranilate (PRA). In Saccharolobus solfataricus (strain ATCC 35092 / DSM 1617 / JCM 11322 / P2) (Sulfolobus solfataricus), this protein is Anthranilate phosphoribosyltransferase.